Consider the following 118-residue polypeptide: Putative membrane protein insertion efficiency factor (118 aa).

The disordered stretch occupies residues 76–118; it reads WDPVPQRRPRRRDAAAADAAMSAPHACKGSPHAVVGDTNDGST. The span at 91 to 101 shows a compositional bias: low complexity; the sequence is AADAAMSAPHA.

This sequence belongs to the UPF0161 family.

The protein resides in the cell membrane. In terms of biological role, could be involved in insertion of integral membrane proteins into the membrane. In Nocardia farcinica (strain IFM 10152), this protein is Putative membrane protein insertion efficiency factor.